Reading from the N-terminus, the 313-residue chain is MSITIDTSVDIDLPTPPQSNGSQKRNLLLAPPSVAAHEEKLRDVFSTFDRSSTDLQMFDRLSAGFVSLPPNTYDLVLVLTDAQSDEAVRLLTRDVYTALVPAMKAGARLQLQQGSLGASEGLEAILAGLVEKDGGFEKPVQEAAVPLKLGGRKKKDKTNGVNGVQNGVATNGASTNGVGMFDPAQNNDDELIDEDALLSDDDLKRPLPRPQNCVPETAKKRRRPCKDCTCGLASQLEEEDRAREAKAAQDLNILKLNTDDLNDELDFTVQGKTSSCNSCSLGDAFRCSSCPYIGLPPFKPGEEVKIMNDMVQL.

Disordered regions lie at residues 1–25 (MSITIDTSVDIDLPTPPQSNGSQKR) and 151–187 (GRKKKDKTNGVNGVQNGVATNGASTNGVGMFDPAQNN). An N-terminal SAM-like domain region spans residues 20-145 (NGSQKRNLLL…FEKPVQEAAV (126 aa)). Positions 146–203 (PLKLGGRKKKDKTNGVNGVQNGVATNGASTNGVGMFDPAQNNDDELIDEDALLSDDDL) are linker. The segment covering 159–177 (NGVNGVQNGVATNGASTNG) has biased composition (polar residues). Residues C213, C225, C228, and C230 each contribute to the [2Fe-2S] cluster site. The fe-S binding site A stretch occupies residues 213-230 (CVPETAKKRRRPCKDCTC). C276, C279, C287, and C290 together coordinate [4Fe-4S] cluster. 2 short sequence motifs (cx2C motif) span residues 276 to 279 (CNSC) and 287 to 290 (CSSC). The segment at 276 to 290 (CNSCSLGDAFRCSSC) is fe-S binding site B.

This sequence belongs to the anamorsin family. In terms of assembly, monomer. Interacts with tah18. Interacts with mia40. The cofactor is [2Fe-2S] cluster. [4Fe-4S] cluster serves as cofactor.

It is found in the cytoplasm. Its subcellular location is the mitochondrion intermembrane space. Component of the cytosolic iron-sulfur (Fe-S) protein assembly (CIA) machinery required for the maturation of extramitochondrial Fe-S proteins. Part of an electron transfer chain functioning in an early step of cytosolic Fe-S biogenesis, facilitating the de novo assembly of a [4Fe-4S] cluster on the scaffold complex cfd1-nbp35. Electrons are transferred to dre2 from NADPH via the FAD- and FMN-containing protein tah18. Tah18-dre2 are also required for the assembly of the diferric tyrosyl radical cofactor of ribonucleotide reductase (RNR), probably by providing electrons for reduction during radical cofactor maturation in the catalytic small subunit rnr2. In Aspergillus oryzae (strain ATCC 42149 / RIB 40) (Yellow koji mold), this protein is Fe-S cluster assembly protein dre2.